Reading from the N-terminus, the 255-residue chain is Thiazole synthase (255 aa).

Lysine 96 serves as the catalytic Schiff-base intermediate with DXP. Residues glycine 157, alanine 183–glycine 184, and asparagine 205–serine 206 contribute to the 1-deoxy-D-xylulose 5-phosphate site.

It belongs to the ThiG family. As to quaternary structure, homotetramer. Forms heterodimers with either ThiH or ThiS.

It is found in the cytoplasm. It carries out the reaction [ThiS sulfur-carrier protein]-C-terminal-Gly-aminoethanethioate + 2-iminoacetate + 1-deoxy-D-xylulose 5-phosphate = [ThiS sulfur-carrier protein]-C-terminal Gly-Gly + 2-[(2R,5Z)-2-carboxy-4-methylthiazol-5(2H)-ylidene]ethyl phosphate + 2 H2O + H(+). It functions in the pathway cofactor biosynthesis; thiamine diphosphate biosynthesis. Functionally, catalyzes the rearrangement of 1-deoxy-D-xylulose 5-phosphate (DXP) to produce the thiazole phosphate moiety of thiamine. Sulfur is provided by the thiocarboxylate moiety of the carrier protein ThiS. In vitro, sulfur can be provided by H(2)S. This Exiguobacterium sibiricum (strain DSM 17290 / CCUG 55495 / CIP 109462 / JCM 13490 / 255-15) protein is Thiazole synthase.